The chain runs to 449 residues: Bifunctional protein GlmU (449 aa).

Residues 1–225 are pyrophosphorylase; sequence MLSVAILAAG…NGELQGINNR (225 aa). UDP-N-acetyl-alpha-D-glucosamine-binding positions include 7–10, Lys-21, Gln-73, and 78–79; these read LAAG and GT. Asp-103 provides a ligand contact to Mg(2+). Gly-140, Glu-154, Asn-169, and Asn-223 together coordinate UDP-N-acetyl-alpha-D-glucosamine. Position 223 (Asn-223) interacts with Mg(2+). Residues 226-246 are linker; it reads IHLSECEECIQNSIKEKHMLN. Positions 247–449 are N-acetyltransferase; sequence GVTFINKASC…NIENWKKKKS (203 aa). UDP-N-acetyl-alpha-D-glucosamine contacts are provided by Arg-328 and Lys-346. The Proton acceptor role is filled by His-358. UDP-N-acetyl-alpha-D-glucosamine-binding residues include Tyr-361 and Asn-372. Positions 375, 418, and 435 each coordinate acetyl-CoA.

The protein in the N-terminal section; belongs to the N-acetylglucosamine-1-phosphate uridyltransferase family. In the C-terminal section; belongs to the transferase hexapeptide repeat family. In terms of assembly, homotrimer. Mg(2+) serves as cofactor.

Its subcellular location is the cytoplasm. It carries out the reaction alpha-D-glucosamine 1-phosphate + acetyl-CoA = N-acetyl-alpha-D-glucosamine 1-phosphate + CoA + H(+). The catalysed reaction is N-acetyl-alpha-D-glucosamine 1-phosphate + UTP + H(+) = UDP-N-acetyl-alpha-D-glucosamine + diphosphate. It functions in the pathway nucleotide-sugar biosynthesis; UDP-N-acetyl-alpha-D-glucosamine biosynthesis; N-acetyl-alpha-D-glucosamine 1-phosphate from alpha-D-glucosamine 6-phosphate (route II): step 2/2. It participates in nucleotide-sugar biosynthesis; UDP-N-acetyl-alpha-D-glucosamine biosynthesis; UDP-N-acetyl-alpha-D-glucosamine from N-acetyl-alpha-D-glucosamine 1-phosphate: step 1/1. Its pathway is bacterial outer membrane biogenesis; LPS lipid A biosynthesis. Its function is as follows. Catalyzes the last two sequential reactions in the de novo biosynthetic pathway for UDP-N-acetylglucosamine (UDP-GlcNAc). The C-terminal domain catalyzes the transfer of acetyl group from acetyl coenzyme A to glucosamine-1-phosphate (GlcN-1-P) to produce N-acetylglucosamine-1-phosphate (GlcNAc-1-P), which is converted into UDP-GlcNAc by the transfer of uridine 5-monophosphate (from uridine 5-triphosphate), a reaction catalyzed by the N-terminal domain. The protein is Bifunctional protein GlmU of Prochlorococcus marinus (strain AS9601).